Consider the following 653-residue polypeptide: Acetyl-coenzyme A synthetase (653 aa).

CoA contacts are provided by residues 196–199 (RGGK) and Thr-315. ATP is bound by residues 391–393 (GEP), 415–420 (DTWWQT), Asp-506, and Arg-521. Residue Ser-529 coordinates CoA. Arg-532 is an ATP binding site. 2 residues coordinate Mg(2+): Val-543 and Val-548. Residue Lys-618 is modified to N6-acetyllysine.

This sequence belongs to the ATP-dependent AMP-binding enzyme family. The cofactor is Mg(2+). Acetylated. Deacetylation by the SIR2-homolog deacetylase activates the enzyme.

The enzyme catalyses acetate + ATP + CoA = acetyl-CoA + AMP + diphosphate. In terms of biological role, catalyzes the conversion of acetate into acetyl-CoA (AcCoA), an essential intermediate at the junction of anabolic and catabolic pathways. AcsA undergoes a two-step reaction. In the first half reaction, AcsA combines acetate with ATP to form acetyl-adenylate (AcAMP) intermediate. In the second half reaction, it can then transfer the acetyl group from AcAMP to the sulfhydryl group of CoA, forming the product AcCoA. This chain is Acetyl-coenzyme A synthetase, found in Laribacter hongkongensis (strain HLHK9).